The primary structure comprises 121 residues: UPF0102 protein AAur_2443 (121 aa).

The protein belongs to the UPF0102 family.

The chain is UPF0102 protein AAur_2443 from Paenarthrobacter aurescens (strain TC1).